A 394-amino-acid chain; its full sequence is L-lactate dehydrogenase (394 aa).

Residues 1 to 380 (MIISAASDYR…SRDSLVQNAE (380 aa)) form the FMN hydroxy acid dehydrogenase domain. Residue tyrosine 24 coordinates substrate. FMN-binding residues include serine 106 and glutamine 127. Residue tyrosine 129 coordinates substrate. Position 155 (threonine 155) interacts with FMN. Arginine 164 contacts substrate. Lysine 251 contacts FMN. Histidine 275 serves as the catalytic Proton acceptor. Position 278 (arginine 278) interacts with substrate. 306-330 (DSGIRNGLDVVRMIALGADSVLLGR) contributes to the FMN binding site.

Belongs to the FMN-dependent alpha-hydroxy acid dehydrogenase family. FMN is required as a cofactor.

It is found in the cell inner membrane. It carries out the reaction (S)-lactate + A = pyruvate + AH2. Its function is as follows. Catalyzes the conversion of L-lactate to pyruvate. Is coupled to the respiratory chain. The sequence is that of L-lactate dehydrogenase from Klebsiella pneumoniae (strain 342).